The primary structure comprises 452 residues: UDP-glycosyltransferase 79B11 (452 aa).

UDP-alpha-D-glucose contacts are provided by residues Ser260, 319-325 (VQQPSWQ), 340-348 (HCGFGSMWE), and 362-365 (LNDQ).

This sequence belongs to the UDP-glycosyltransferase family.

This chain is UDP-glycosyltransferase 79B11 (UGT79B11), found in Arabidopsis thaliana (Mouse-ear cress).